The chain runs to 527 residues: Catalase (527 aa).

Residues 1-22 show a composition bias toward basic and acidic residues; the sequence is MADSRDPASDQMKQWKEQRAPQ. The disordered stretch occupies residues 1 to 34; that stretch reads MADSRDPASDQMKQWKEQRAPQKPDVLTTGGGNP. Alanine 2 is modified (N-acetylalanine). Serine 9 bears the Phosphoserine mark. Lysine 13 is subject to N6-succinyllysine. Catalysis depends on residues histidine 75 and asparagine 148. Residues histidine 194, serine 201, arginine 203, and asparagine 213 each coordinate NADP(+). Residue lysine 221 is modified to N6-succinyllysine. Position 233 is an N6-acetyllysine (lysine 233). NADP(+) is bound by residues lysine 237, tryptophan 303, histidine 305, and lysine 306. An N6-acetyllysine; alternate modification is found at lysine 306. Lysine 306 carries the N6-succinyllysine; alternate modification. Tyrosine 358 provides a ligand contact to heme. A phosphoserine mark is found at serine 417 and serine 434. An N6-acetyllysine; alternate mark is found at lysine 449 and lysine 480. Residues lysine 449 and lysine 480 each carry the N6-succinyllysine; alternate modification. Position 511 is a phosphothreonine (threonine 511). The residue at position 517 (serine 517) is a Phosphoserine. Lysine 522 carries the post-translational modification N6-succinyllysine. Positions 524–527 match the Microbody targeting signal; atypical motif; sequence KANL.

The protein belongs to the catalase family. As to quaternary structure, homotetramer. Interacts (via microbody targeting signal) with PEX5, monomeric form interacts with PEX5, leading to its translocation into peroxisomes. Requires heme as cofactor. NADP(+) serves as cofactor. As to expression, expressed in renal proximal tubules (at protein level).

The protein localises to the peroxisome matrix. It catalyses the reaction 2 H2O2 = O2 + 2 H2O. Catalyzes the degradation of hydrogen peroxide (H(2)O(2)) generated by peroxisomal oxidases to water and oxygen, thereby protecting cells from the toxic effects of hydrogen peroxide. Promotes growth of cells including T-cells, B-cells, myeloid leukemia cells, melanoma cells, mastocytoma cells and normal and transformed fibroblast cells. The sequence is that of Catalase (Cat) from Rattus norvegicus (Rat).